Reading from the N-terminus, the 378-residue chain is D-alanine--D-alanine ligase (378 aa).

Positions 157–368 (KVVFESAGLS…YGDLIDELIH (212 aa)) constitute an ATP-grasp domain. Position 189–244 (189–244 (VDKLGFPVFVKPARAGSSMGISKVDSMEGLDAAIDEARRHDLKLVIEAGIVGREIE)) interacts with ATP. Residues aspartate 322, glutamate 335, and asparagine 337 each coordinate Mg(2+).

The protein belongs to the D-alanine--D-alanine ligase family. Requires Mg(2+) as cofactor. The cofactor is Mn(2+).

The protein localises to the cytoplasm. It catalyses the reaction 2 D-alanine + ATP = D-alanyl-D-alanine + ADP + phosphate + H(+). The protein operates within cell wall biogenesis; peptidoglycan biosynthesis. Cell wall formation. This chain is D-alanine--D-alanine ligase, found in Paenarthrobacter aurescens (strain TC1).